A 255-amino-acid polypeptide reads, in one-letter code: MPEGDTVWHTAATLRRHLAGRTLTRCDIRVPRFAAVDLTGEVVDEVISRGKHLFIRTGTASIHSHLQMDGSWRVGNRPVRVDHRARIILEANQQEQAIRVVGVDLGLLEVIDRHNDGAVVAHLGPDLLADDWDPQRAAANLIVAPDRPIAEALLDQRVLAGIGNVYCNELCFVSGVLPTAPVSAVADPRRLVTRARDMLWVNRFRWNRCTTGDTRAGRRLWVYGRAGQGCRRCGTLIAYDTTDERVRYWCPACQR.

The active-site Schiff-base intermediate with DNA is proline 2. Glutamate 3 acts as the Proton donor in catalysis. Lysine 51 functions as the Proton donor; for beta-elimination activity in the catalytic mechanism. DNA is bound by residues glutamine 67 and asparagine 164. An FPG-type zinc finger spans residues 221–255 (WVYGRAGQGCRRCGTLIAYDTTDERVRYWCPACQR). The Proton donor; for delta-elimination activity role is filled by arginine 245.

The protein belongs to the FPG family. Zn(2+) is required as a cofactor.

It carries out the reaction 2'-deoxyribonucleotide-(2'-deoxyribose 5'-phosphate)-2'-deoxyribonucleotide-DNA = a 3'-end 2'-deoxyribonucleotide-(2,3-dehydro-2,3-deoxyribose 5'-phosphate)-DNA + a 5'-end 5'-phospho-2'-deoxyribonucleoside-DNA + H(+). In terms of biological role, involved in base excision repair of DNA damaged by oxidation or by mutagenic agents. Acts as a DNA glycosylase that recognizes and removes damaged bases. Has AP (apurinic/apyrimidinic) lyase activity and introduces nicks in the DNA strand. Cleaves the DNA backbone by beta-delta elimination to generate a single-strand break at the site of the removed base with both 3'- and 5'-phosphates. The protein is Endonuclease 8 2 (nei2) of Mycobacterium bovis (strain ATCC BAA-935 / AF2122/97).